Reading from the N-terminus, the 63-residue chain is MLGQSIRRFTTSVVRRSHYEEGPGKNLPFSVENKWRLLAMMTVYFGSGFAAPFFIVRHQLLKK.

Residues 1–16 (MLGQSIRRFTTSVVRR) constitute a mitochondrion transit peptide. At 17 to 34 (SHYEEGPGKNLPFSVENK) the chain is on the mitochondrial matrix side. Position 25 is an N6-acetyllysine; alternate (K25). An N6-succinyllysine; alternate modification is found at K25. A helical membrane pass occupies residues 35 to 57 (WRLLAMMTVYFGSGFAAPFFIVR). At 58–63 (HQLLKK) the chain is on the mitochondrial intermembrane side.

It belongs to the cytochrome c oxidase VIIc family. Component of the cytochrome c oxidase (complex IV, CIV), a multisubunit enzyme composed of 14 subunits. The complex is composed of a catalytic core of 3 subunits MT-CO1, MT-CO2 and MT-CO3, encoded in the mitochondrial DNA, and 11 supernumerary subunits COX4I, COX5A, COX5B, COX6A, COX6B, COX6C, COX7A, COX7B, COX7C, COX8 and NDUFA4, which are encoded in the nuclear genome. The complex exists as a monomer or a dimer and forms supercomplexes (SCs) in the inner mitochondrial membrane with NADH-ubiquinone oxidoreductase (complex I, CI) and ubiquinol-cytochrome c oxidoreductase (cytochrome b-c1 complex, complex III, CIII), resulting in different assemblies (supercomplex SCI(1)III(2)IV(1) and megacomplex MCI(2)III(2)IV(2)). Interacts with RAB5IF.

It localises to the mitochondrion inner membrane. It participates in energy metabolism; oxidative phosphorylation. Component of the cytochrome c oxidase, the last enzyme in the mitochondrial electron transport chain which drives oxidative phosphorylation. The respiratory chain contains 3 multisubunit complexes succinate dehydrogenase (complex II, CII), ubiquinol-cytochrome c oxidoreductase (cytochrome b-c1 complex, complex III, CIII) and cytochrome c oxidase (complex IV, CIV), that cooperate to transfer electrons derived from NADH and succinate to molecular oxygen, creating an electrochemical gradient over the inner membrane that drives transmembrane transport and the ATP synthase. Cytochrome c oxidase is the component of the respiratory chain that catalyzes the reduction of oxygen to water. Electrons originating from reduced cytochrome c in the intermembrane space (IMS) are transferred via the dinuclear copper A center (CU(A)) of subunit 2 and heme A of subunit 1 to the active site in subunit 1, a binuclear center (BNC) formed by heme A3 and copper B (CU(B)). The BNC reduces molecular oxygen to 2 water molecules using 4 electrons from cytochrome c in the IMS and 4 protons from the mitochondrial matrix. The protein is Cytochrome c oxidase subunit 7C, mitochondrial (Cox7c) of Mus musculus (Mouse).